The chain runs to 154 residues: MVLMGKSRVAIYTDGACSGNPGPGGWGAVLRFGDGGERRISGGSDDTTNNRMELTAVIMALAALSGPCSVCVNTDSTYVKNGITEWIRKWKLNGWRTSNKSAVKNVDLWVELERLTLLHSIEWRWVKAHAGNEYNEEADMLARGEVERRMVIPK.

The 143-residue stretch at 5 to 147 (GKSRVAIYTD…ADMLARGEVE (143 aa)) folds into the RNase H type-1 domain. Mg(2+)-binding residues include Asp-14, Glu-53, Asp-75, and Asp-139.

This sequence belongs to the RNase H family. As to quaternary structure, monomer. Mg(2+) serves as cofactor.

The protein localises to the cytoplasm. It catalyses the reaction Endonucleolytic cleavage to 5'-phosphomonoester.. Endonuclease that specifically degrades the RNA of RNA-DNA hybrids. The protein is Ribonuclease H of Anaplasma marginale (strain St. Maries).